A 129-amino-acid polypeptide reads, in one-letter code: Small ribosomal subunit protein uS11 (129 aa).

The protein belongs to the universal ribosomal protein uS11 family. In terms of assembly, part of the 30S ribosomal subunit. Interacts with proteins S7 and S18. Binds to IF-3.

Its function is as follows. Located on the platform of the 30S subunit, it bridges several disparate RNA helices of the 16S rRNA. Forms part of the Shine-Dalgarno cleft in the 70S ribosome. This Bacillus mycoides (strain KBAB4) (Bacillus weihenstephanensis) protein is Small ribosomal subunit protein uS11.